A 790-amino-acid chain; its full sequence is Histone-lysine N-methyltransferase, H3 lysine-9 specific SUVH6 (790 aa).

Positions 251-271 are disordered; the sequence is QLRILGVGTSSGSSSGDSSRN. Positions 256 to 268 are enriched in low complexity; sequence GVGTSSGSSSGDS. In terms of domain architecture, YDG spans 330-482; the sequence is GEVPGVEVGD…MNVFKFQLRR (153 aa). One can recognise a Pre-SET domain in the interval 551–613; it reads KSCCCTTRCT…SCYLRVTQHG (63 aa). Residues Cys-553, Cys-554, Cys-555, Cys-559, Cys-567, Cys-569, Cys-595, Cys-599, Cys-601, and Cys-605 each contribute to the Zn(2+) site. Residues 616–760 enclose the SET domain; the sequence is LPLEIFKTKS…PLQELCYDYN (145 aa). S-adenosyl-L-methionine contacts are provided by residues 626–628, Asp-662, Tyr-664, Arg-714, and 717–718; these read RGW and NH. The Zn(2+) site is built by Cys-720, Cys-778, Cys-780, and Cys-785. Positions 774-790 constitute a Post-SET domain; that stretch reads KQKPCFCGAAVCRRRLY.

The protein belongs to the class V-like SAM-binding methyltransferase superfamily. Histone-lysine methyltransferase family. Suvar3-9 subfamily.

It is found in the nucleus. It localises to the chromosome. The protein resides in the centromere. The enzyme catalyses N(6)-methyl-L-lysyl(9)-[histone H3] + S-adenosyl-L-methionine = N(6),N(6)-dimethyl-L-lysyl(9)-[histone H3] + S-adenosyl-L-homocysteine + H(+). It carries out the reaction L-lysyl(9)-[histone H3] + S-adenosyl-L-methionine = N(6)-methyl-L-lysyl(9)-[histone H3] + S-adenosyl-L-homocysteine + H(+). Its function is as follows. Histone methyltransferase. Methylates 'Lys-9' of histone H3. H3 'Lys-9' methylation represents a specific tag for epigenetic transcriptional repression. Seems to act preferentially on dsMRNA. The chain is Histone-lysine N-methyltransferase, H3 lysine-9 specific SUVH6 (SUVH6) from Arabidopsis thaliana (Mouse-ear cress).